A 418-amino-acid chain; its full sequence is Nuclear hormone receptor family member nhr-209 (418 aa).

The segment at residues proline 43–alanine 121 is a DNA-binding region (nuclear receptor). 2 NR C4-type zinc fingers span residues cysteine 46–cysteine 66 and cysteine 82–cysteine 104. In terms of domain architecture, NR LBD spans threonine 174 to glutamate 414. Residues glutamate 403–glutamate 414 are AF-2.

This sequence belongs to the nuclear hormone receptor family.

Its subcellular location is the nucleus. Functionally, transcriptional regulator. Plays a role in modulation of lifespan and immunity. The chain is Nuclear hormone receptor family member nhr-209 from Caenorhabditis elegans.